Reading from the N-terminus, the 1123-residue chain is MDLGPGDAAGGGPLAPRPRRRRSLRRLFSRFLLALGSRSRPGDSPPRPQPGHCDGDGEGGFACAPGPVPAAPGSPGEERPPGPQPQLQLPAGDGARPPGAQGLKNHGNTCFMNAVVQCLSNTDLLAEFLALGRYRAAPGRAEVTEQLAALVRALWTREYTPQLSAEFKNAVSKYGSQFQGNSQHDALEFLLWLLDRVHEDLEGSSRGPVSEKLPPEATKTSENCLSPSAQLPLGQSFVQSHFQAQYRSSLTCPHCLKQSNTFDPFLCVSLPIPLRQTRFLSVTLVFPSKSQRFLRVGLAVPILSTVAALRKMVAEEGGVPADEVILVELYPSGFQRSFFDEEDLNTIAEGDNVYAFQVPPSPSQGTLSAHPLGLSASPRLAAREGQRFSLSLHSESKVLILFCNLVGSGQQASRFGPPFLIREDRAVSWAQLQQSILSKVRHLMKSEAPVQNLGSLFSIRVVGLSVACSYLSPKDSRPLCHWAVDRVLHLRRPGGPPHVKLAVEWDSSVKERLFGSLQEERAQDADSVWQQQQAHQQHSCTLDECFQFYTKEEQLAQDDAWKCPHCQVLQQGMVKLSLWTLPDILIIHLKRFCQVGERRNKLSTLVKFPLSGLNMAPHVAQRSTSPEAGLGPWPSWKQPDCLPTSYPLDFLYDLYAVCNHHGNLQGGHYTAYCRNSLDGQWYSYDDSTVEPLREDEVNTRGAYILFYQKRNSIPPWSASSSMRGSTSSSLSDHWLLRLGSHAGSTRGSLLSWSSAPCPSLPQVPDSPIFTNSLCNQEKGGLEPRRLVRGVKGRSISMKAPTTSRAKQGPFKTMPLRWSFGSKEKPPGASVELVEYLESRRRPRSTSQSIVSLLTGTAGEDEKSASPRSNVALPANSEDGGRAIERGPAGVPCPSAQPNHCLAPGNSDGPNTARKLKENAGQDIKLPRKFDLPLTVMPSVEHEKPARPEGQKAMNWKESFQMGSKSSPPSPYMGFSGNSKDSRRGTSELDRPLQGTLTLLRSVFRKKENRRNERAEVSPQVPPVSLVSGGLSPAMDGQAPGSPPALRIPEGLARGLGSRLERDVWSAPSSLRLPRKASRAPRGSALGMSQRTVPGEQASYGTFQRVKYHTLSLGRKKTLPESSF.

Residues 1–102 (MDLGPGDAAG…DGARPPGAQG (102 aa)) are disordered. The segment covering 17 to 28 (RPRRRRSLRRLF) has biased composition (basic residues). A compositionally biased stretch (low complexity) spans 29 to 39 (SRFLLALGSRS). In terms of domain architecture, USP spans 101-710 (QGLKNHGNTC…GAYILFYQKR (610 aa)). C110 serves as the catalytic Nucleophile. Residues 202–221 (EGSSRGPVSEKLPPEATKTS) form a disordered region. H668 (proton acceptor) is an active-site residue. R746 is modified (asymmetric dimethylarginine). 4 disordered regions span residues 795 to 826 (ISMKAPTTSRAKQGPFKTMPLRWSFGSKEKPP), 854 to 886 (TGTAGEDEKSASPRSNVALPANSEDGGRAIERG), 959 to 1049 (FQMG…RIPE), and 1068 to 1099 (SSLRLPRKASRAPRGSALGMSQRTVPGEQASY). At S969 the chain carries Phosphoserine. Over residues 979–990 (KDSRRGTSELDR) the composition is skewed to basic and acidic residues. Residues 1016-1027 (VSPQVPPVSLVS) are compositionally biased toward low complexity. S1041 carries the phosphoserine modification.

The protein belongs to the peptidase C19 family. In terms of tissue distribution, expressed in brain, aorta and lung at low levels.

It carries out the reaction Thiol-dependent hydrolysis of ester, thioester, amide, peptide and isopeptide bonds formed by the C-terminal Gly of ubiquitin (a 76-residue protein attached to proteins as an intracellular targeting signal).. In terms of biological role, may recognize and hydrolyze the peptide bond at the C-terminal Gly of ubiquitin. Involved in the processing of poly-ubiquitin precursors as well as that of ubiquitinated proteins. The protein is Ubiquitin carboxyl-terminal hydrolase 43 (USP43) of Homo sapiens (Human).